The chain runs to 152 residues: Deoxyuridine 5'-triphosphate nucleotidohydrolase (152 aa).

Residues 72 to 74 (RSG), Asn85, and 89 to 91 (TID) each bind substrate.

It belongs to the dUTPase family. Mg(2+) serves as cofactor.

The enzyme catalyses dUTP + H2O = dUMP + diphosphate + H(+). It functions in the pathway pyrimidine metabolism; dUMP biosynthesis; dUMP from dCTP (dUTP route): step 2/2. Functionally, this enzyme is involved in nucleotide metabolism: it produces dUMP, the immediate precursor of thymidine nucleotides and it decreases the intracellular concentration of dUTP so that uracil cannot be incorporated into DNA. The sequence is that of Deoxyuridine 5'-triphosphate nucleotidohydrolase from Rhodopseudomonas palustris (strain BisB5).